The sequence spans 236 residues: Uridylate kinase (236 aa).

Position 10–13 (10–13 (KLSG)) interacts with ATP. Glycine 52 provides a ligand contact to UMP. Residues glycine 53 and arginine 57 each coordinate ATP. UMP contacts are provided by residues aspartate 72 and 133–140 (TGNPFFTT). Threonine 160, tyrosine 166, and aspartate 169 together coordinate ATP.

It belongs to the UMP kinase family. Homohexamer.

Its subcellular location is the cytoplasm. The enzyme catalyses UMP + ATP = UDP + ADP. The protein operates within pyrimidine metabolism; CTP biosynthesis via de novo pathway; UDP from UMP (UMPK route): step 1/1. With respect to regulation, inhibited by UTP. In terms of biological role, catalyzes the reversible phosphorylation of UMP to UDP. This Parabacteroides distasonis (strain ATCC 8503 / DSM 20701 / CIP 104284 / JCM 5825 / NCTC 11152) protein is Uridylate kinase.